A 75-amino-acid polypeptide reads, in one-letter code: U14-hexatoxin-Mg1a (75 aa).

Positions 1–19 are cleaved as a signal peptide; it reads MKLTLFILIVFVVLANVYA. The propeptide occupies 20–31; that stretch reads AGISERNIIGGR.

Contains 4 disulfide bonds. In terms of tissue distribution, expressed by the venom gland.

It localises to the secreted. Functionally, no toxicity is observed upon intracranial injection into mice and intrathorax injection into crickets. The chain is U14-hexatoxin-Mg1a from Macrothele gigas (Japanese funnel web spider).